The primary structure comprises 190 residues: MRPITILCTLATLSTTLAVPFSQASKSTSASRSTSSSTVPASLPSPTLSGPNACPPNKFKQCCTTLSQVGDDLLKPLGAVVPLVGAIQVNSLVGVSCRPMADAAPESTCGNAVMCCDSSTVGGDDLMQTSCQDFALAKKREREAIERQQRRFSEYQRMMLSQSATPAPTSTGVDVMGSSFSKAKATPTRV.

Positions 1-18 are cleaved as a signal peptide; it reads MRPITILCTLATLSTTLA. Cystine bridges form between Cys54–Cys115, Cys62–Cys109, Cys63–Cys97, and Cys116–Cys131.

This sequence belongs to the fungal hydrophobin family. In terms of assembly, self-assembles to form functional amyloid fibrils called rodlets. Self-assembly into fibrillar rodlets occurs spontaneously at hydrophobic:hydrophilic interfaces and the rodlets further associate laterally to form amphipathic monolayers.

The protein resides in the secreted. Its subcellular location is the cell wall. Its function is as follows. Aerial growth, conidiation, and dispersal of filamentous fungi in the environment rely upon a capability of their secreting small amphipathic proteins called hydrophobins (HPBs) with low sequence identity. Class I can self-assemble into an outermost layer of rodlet bundles on aerial cell surfaces, conferring cellular hydrophobicity that supports fungal growth, development and dispersal; whereas Class II form highly ordered films at water-air interfaces through intermolecular interactions but contribute nothing to the rodlet structure. RodF and rodG belong to Class III, which contains hydrophobins with intermediate (between classes I and II) or atypical characteristics. RodF, unlike rodA, is not required for rodlet formation. The sequence is that of Class III hydrophobin F from Aspergillus fumigatus (strain ATCC MYA-4609 / CBS 101355 / FGSC A1100 / Af293) (Neosartorya fumigata).